We begin with the raw amino-acid sequence, 597 residues long: Aspartate--tRNA(Asp/Asn) ligase (597 aa).

Glu175 contributes to the L-aspartate binding site. The aspartate stretch occupies residues 199 to 202 (QQYK). Arg221 and His454 together coordinate L-aspartate. 221-223 (RDE) contacts ATP. Residue Glu488 participates in ATP binding. L-aspartate is bound at residue Arg495. 540-543 (GIDR) serves as a coordination point for ATP.

Belongs to the class-II aminoacyl-tRNA synthetase family. Type 1 subfamily. In terms of assembly, homodimer.

The protein resides in the cytoplasm. The enzyme catalyses tRNA(Asx) + L-aspartate + ATP = L-aspartyl-tRNA(Asx) + AMP + diphosphate. Functionally, aspartyl-tRNA synthetase with relaxed tRNA specificity since it is able to aspartylate not only its cognate tRNA(Asp) but also tRNA(Asn). Reaction proceeds in two steps: L-aspartate is first activated by ATP to form Asp-AMP and then transferred to the acceptor end of tRNA(Asp/Asn). The chain is Aspartate--tRNA(Asp/Asn) ligase from Bartonella tribocorum (strain CIP 105476 / IBS 506).